A 101-amino-acid chain; its full sequence is Small ribosomal subunit protein eS24 (101 aa).

It belongs to the eukaryotic ribosomal protein eS24 family.

The protein is Small ribosomal subunit protein eS24 of Methanosarcina mazei (strain ATCC BAA-159 / DSM 3647 / Goe1 / Go1 / JCM 11833 / OCM 88) (Methanosarcina frisia).